The following is a 512-amino-acid chain: MAILSLRAPGPWQAMQVWADRTLLTPHTGVTSQVLGVAAAVMTPLPGGHAAGRTREARWDAMEYDEKLARFRQAHLNPFNKQSGPRQHEQGPGEEVPDVTPEEALPELPPGEPEFRCPERVMDLGLSEDHFSRPVGLFLASDVQQLRQAIEECKQVILELPEQSEKQKDAVVRLIHLRLKLQELKDPNEDEPNIRVLLEHRFYKEKSKSVKQTCDKCNTIIWGLIQTWYTCTGCYYRCHSKCLNLISKPCVSSKVSHQAEYELNICPETGLDSQDYRCAECRAPISLRGVPSEARQCDYTGQYYCSHCHWNDLAVIPARVVHNWDFEPRKVSRCSMRYLALMVSRPVLRLREINPLLFSYVEELVEIRKLRQDILLMKPYFITCREAMEARLLLQLQDRQHFVENDEMYSVQDLLDVHAGRLGCSLTEIHTLFAKHIKLDCERCQAKGFVCELCREGDVLFPFDSHTSVCADCSAVFHRDCYYDNSTTCPKCARLSLRKQSLFQEPGPDVEA.

An N-acetylmethionine modification is found at Met-1. A disordered region spans residues 77-116 (NPFNKQSGPRQHEQGPGEEVPDVTPEEALPELPPGEPEFR). The segment covering 95–105 (EVPDVTPEEAL) has biased composition (acidic residues). 2 consecutive Phorbol-ester/DAG-type zinc fingers follow at residues 199-250 (EHRF…SKPC) and 429-489 (IHTL…STTC). Phosphoserine is present on Ser-501.

The protein belongs to the DEF8 family. As to quaternary structure, interacts (via C-terminus) with PLEKHM1; this interaction is weak but increased in a RAB7A-dependent manner.

Positively regulates lysosome peripheral distribution and ruffled border formation in osteoclasts. Involved in bone resorption. The polypeptide is Differentially expressed in FDCP 8 homolog (DEF8) (Homo sapiens (Human)).